Here is an 881-residue protein sequence, read N- to C-terminus: Envelope glycoprotein gp160 (881 aa).

A signal peptide spans 1 to 19 (MGCLGNQLLIAILLLSVYG). Residues 20–696 (IYCTQYVTVF…ASWIKYIQYG (677 aa)) are Extracellular-facing. N-linked (GlcNAc...) asparagine; by host glycosylation occurs at Asn-37. Cys-44 and Cys-57 are disulfide-bonded. N-linked (GlcNAc...) asparagine; by host glycans are attached at residues Asn-70, Asn-114, Asn-148, Asn-158, Asn-186, Asn-200, Asn-204, Asn-214, Asn-246, Asn-249, Asn-280, Asn-286, Asn-297, Asn-308, Asn-318, Asn-373, and Asn-379. 5 disulfides stabilise this stretch: Cys-101–Cys-222, Cys-108–Cys-213, Cys-113–Cys-170, Cys-235–Cys-265, and Cys-245–Cys-257. The V1 stretch occupies residues 113–169 (CNKSETDRWGLTKSSTTITTAAPTSAPVSEKIDMVNETSSCIAQNNCTGLEQEQMIS). The tract at residues 170–213 (CKFTMTGLKRDKTKEYNETWYSTDLVCEQGNSTDNESRCYMNHC) is V2. The segment at 313 to 345 (CRRPGNKTVLPVTIMSGLVFHSQPLTDRPKQAW) is V3. Residues Cys-313 and Cys-346 are joined by a disulfide bond. Disulfide bonds link Cys-397-Cys-461 and Cys-404-Cys-434. A V4 region spans residues 404-434 (CKMNWFLNWVEDRDVTTQRPKERHRRNYVPC). 2 N-linked (GlcNAc...) asparagine; by host glycosylation sites follow: Asn-462 and Asn-478. A V5 region spans residues 477 to 484 (GNQTSITM). Positions 528 to 548 (GVFVLGFLGFLATAGSAMGAA) are fusion peptide. The tract at residues 591–607 (LQTRVTAIEKYLEDQAQ) is immunosuppression. 3 N-linked (GlcNAc...) asparagine; by host glycosylation sites follow: Asn-627, Asn-636, and Asn-652. A coiled-coil region spans residues 636 to 668 (NDTWQEWERKVDFLEENITALLEEAQIQQEKNM). An MPER; binding to GalCer region spans residues 673–694 (KLNSWDVFGNWFDLASWIKYIQ). The chain crosses the membrane as a helical span at residues 697–717 (IYVVVGVILLRIVIYIVQMLA). The Cytoplasmic portion of the chain corresponds to 718–881 (KLRQGYRPVF…IRQGLELTLL (164 aa)). A YXXV motif; contains endocytosis signal motif is present at residues 723–726 (YRPV). The segment at 737-761 (THTQQDPALPTREGKEGDGGEGGGN) is disordered. Residue Cys-789 is the site of S-palmitoyl cysteine; by host attachment. The Di-leucine internalization motif motif lies at 880 to 881 (LL).

The mature envelope protein (Env) consists of a homotrimer of non-covalently associated gp120-gp41 heterodimers. The resulting complex protrudes from the virus surface as a spike. Interacts with host CD4 and CCR5. Gp120 also interacts with the C-type lectins CD209/DC-SIGN and CLEC4M/DC-SIGNR (collectively referred to as DC-SIGN(R)). As to quaternary structure, the mature envelope protein (Env) consists of a homotrimer of non-covalently associated gp120-gp41 heterodimers. The resulting complex protrudes from the virus surface as a spike. In terms of processing, specific enzymatic cleavages in vivo yield mature proteins. Envelope glycoproteins are synthesized as an inactive precursor that is heavily N-glycosylated and processed likely by host cell furin in the Golgi to yield the mature SU and TM proteins. The cleavage site between SU and TM requires the minimal sequence [KR]-X-[KR]-R. Post-translationally, palmitoylation of the transmembrane protein and of Env polyprotein (prior to its proteolytic cleavage) is essential for their association with host cell membrane lipid rafts. Palmitoylation is therefore required for envelope trafficking to classical lipid rafts, but not for viral replication.

The protein resides in the virion membrane. It localises to the host cell membrane. It is found in the host endosome membrane. In terms of biological role, the surface protein gp120 (SU) attaches the virus to the host lymphoid cell by binding to the primary receptor CD4. This interaction induces a structural rearrangement creating a high affinity binding site for a chemokine coreceptor like CCR5. This peculiar 2 stage receptor-interaction strategy allows gp120 to maintain the highly conserved coreceptor-binding site in a cryptic conformation, protected from neutralizing antibodies. These changes are transmitted to the transmembrane protein gp41 and are thought to activate its fusogenic potential by unmasking its fusion peptide. Functionally, surface protein gp120 (SU) may target the virus to gut-associated lymphoid tissue (GALT) by binding host ITGA4/ITGB7 (alpha-4/beta-7 integrins), a complex that mediates T-cell migration to the GALT. Interaction between gp120 and ITGA4/ITGB7 would allow the virus to enter GALT early in the infection, infecting and killing most of GALT's resting CD4+ T-cells. This T-cell depletion is believed to be the major insult to the host immune system leading to AIDS. Its function is as follows. The surface protein gp120 is a ligand for CD209/DC-SIGN and CLEC4M/DC-SIGNR, which are respectively found on dendritic cells (DCs), and on endothelial cells of liver sinusoids and lymph node sinuses. These interactions allow capture of viral particles at mucosal surfaces by these cells and subsequent transmission to permissive cells. DCs are professional antigen presenting cells, critical for host immunity by inducing specific immune responses against a broad variety of pathogens. They act as sentinels in various tissues where they take up antigen, process it, and present it to T-cells following migration to lymphoid organs. SIV subverts the migration properties of dendritic cells to gain access to CD4+ T-cells in lymph nodes. Virus transmission to permissive T-cells occurs either in trans (without DCs infection, through viral capture and transmission), or in cis (following DCs productive infection, through the usual CD4-gp120 interaction), thereby inducing a robust infection. In trans infection, bound virions remain infectious over days and it is proposed that they are not degraded, but protected in non-lysosomal acidic organelles within the DCs close to the cell membrane thus contributing to the viral infectious potential during DCs' migration from the periphery to the lymphoid tissues. On arrival at lymphoid tissues, intact virions recycle back to DCs' cell surface allowing virus transmission to CD4+ T-cells. Virion capture also seems to lead to MHC-II-restricted viral antigen presentation, and probably to the activation of SIV-specific CD4+ cells. The transmembrane protein gp41 (TM) acts as a class I viral fusion protein. Under the current model, the protein has at least 3 conformational states: pre-fusion native state, pre-hairpin intermediate state, and post-fusion hairpin state. During fusion of viral and target intracellular membranes, the coiled coil regions (heptad repeats) assume a trimer-of-hairpins structure, positioning the fusion peptide in close proximity to the C-terminal region of the ectodomain. The formation of this structure appears to drive apposition and subsequent fusion of viral and target cell membranes. Complete fusion occurs in host cell endosomes. The virus undergoes clathrin-dependent internalization long before endosomal fusion, thus minimizing the surface exposure of conserved viral epitopes during fusion and reducing the efficacy of inhibitors targeting these epitopes. Membranes fusion leads to delivery of the nucleocapsid into the cytoplasm. In terms of biological role, the envelope glycoprotein gp160 precursor down-modulates cell surface CD4 antigen by interacting with it in the endoplasmic reticulum and blocking its transport to the cell surface. Functionally, the gp120-gp41 heterodimer allows rapid transcytosis of the virus through CD4 negative cells such as simple epithelial monolayers of the intestinal, rectal and endocervical epithelial barriers. Both gp120 and gp41 specifically recognize glycosphingolipids galactosyl-ceramide (GalCer) or 3' sulfo-galactosyl-ceramide (GalS) present in the lipid rafts structures of epithelial cells. Binding to these alternative receptors allows the rapid transcytosis of the virus through the epithelial cells. This transcytotic vesicle-mediated transport of virions from the apical side to the basolateral side of the epithelial cells does not involve infection of the cells themselves. This is Envelope glycoprotein gp160 (env) from Simian immunodeficiency virus (isolate K6W) (SIV-mac).